We begin with the raw amino-acid sequence, 100 residues long: Integration host factor subunit alpha 2 (100 aa).

This sequence belongs to the bacterial histone-like protein family. Heterodimer of an alpha and a beta chain.

In terms of biological role, this protein is one of the two subunits of integration host factor, a specific DNA-binding protein that functions in genetic recombination as well as in transcriptional and translational control. The sequence is that of Integration host factor subunit alpha 2 from Dechloromonas aromatica (strain RCB).